The primary structure comprises 341 residues: UPF0284 protein Ta0078 (341 aa).

This sequence belongs to the UPF0284 family.

The polypeptide is UPF0284 protein Ta0078 (Thermoplasma acidophilum (strain ATCC 25905 / DSM 1728 / JCM 9062 / NBRC 15155 / AMRC-C165)).